The following is a 207-amino-acid chain: Small ribosomal subunit protein uS10m (207 aa).

Residues 1–14 (MNMFRQAVRSFVRY) constitute a mitochondrion transit peptide.

This sequence belongs to the universal ribosomal protein uS10 family. Part of the mitochondrial small ribosomal subunit.

It is found in the mitochondrion. In terms of biological role, involved in mitochondrial genome encoded proteins translation. Involved in the binding of tRNA to the ribosomes. The chain is Small ribosomal subunit protein uS10m (RSM10) from Kluyveromyces lactis (strain ATCC 8585 / CBS 2359 / DSM 70799 / NBRC 1267 / NRRL Y-1140 / WM37) (Yeast).